Consider the following 187-residue polypeptide: Resolvase OPG149 (187 aa).

The protein belongs to the RuvC family. Poxviruses-type subfamily. Mg(2+) is required as a cofactor.

Functionally, plays a role in DNA replication by cleaving viral DNA concatamers to yield unit-length viral genomes. The concatamer junctions contain inverted repeat sequences that can be extruded as cruciforms, yielding Holliday junctions that A22 protein cleaves. In Cynomys gunnisoni (Gunnison's prairie dog), this protein is Resolvase OPG149 (OPG149).